The primary structure comprises 41 residues: Large ribosomal subunit protein bL36 (41 aa).

The protein belongs to the bacterial ribosomal protein bL36 family.

The polypeptide is Large ribosomal subunit protein bL36 (Xylella fastidiosa (strain 9a5c)).